The chain runs to 1122 residues: Midnolin homolog (1122 aa).

The 75-residue stretch at 69–143 folds into the Ubiquitin-like domain; sequence INLNISTTTG…IILIPNVETG (75 aa). Residues 210–300 form a required for interaction with Pc region; the sequence is GGASGSSINA…SGQRSSGRIG (91 aa). Disordered regions lie at residues 257 to 399, 596 to 630, 645 to 677, 746 to 775, 840 to 876, 886 to 905, 922 to 955, and 1067 to 1122; these read VGGS…STLN, KHRH…HFFN, FATS…GAGA, GVVS…KSGS, APTT…RSKM, KCNS…ASGS, AATK…NGCT, and AAPA…DTAA. Residues 266–298 show a composition bias toward low complexity; that stretch reads SGTSSSSSSTSSSSSSSSSSSRTRSSGQRSSGR. 2 stretches are compositionally biased toward basic residues: residues 300-310 and 321-352; these read GHGHVHSHQHP and SHGH…HHHN. The segment covering 375–397 has biased composition (low complexity); sequence PSSSGASGSAPATGTGQSQSSST. A compositionally biased stretch (basic residues) spans 596–610; it reads KHRHYHGQGHGHGHG. Composition is skewed to low complexity over residues 612 to 627, 648 to 663, 746 to 766, 856 to 867, 889 to 903, and 922 to 936; these read GHSS…SSSH, SSSS…SSSP, GVVS…AASG, SGSSSTTSSGSG, SRAQ…TLAS, and AATK…SSHS. 2 stretches are compositionally biased toward polar residues: residues 937–954 and 1071–1085; these read CCQT…SNGC and NSIT…VNGN. Residues 1086–1107 show a composition bias toward low complexity; it reads TSTAPATAATSAAAAPTAAPPS.

As to quaternary structure, interacts with PRC1 complex member polycomb protein Pc; the interaction targets Pc for ubiquitin-independent proteasomal degradation. Does not interact with PRC1 members Ph, Psc or Sce so does not appear to be a member of the PRC1 complex. Interacts with 26S proteasome regulatory subunit Rpn10.

It is found in the nucleus. In terms of biological role, facilitates ubiquitin-independent proteasomal degradation of polycomb protein Pc by interacting directly with the proteasome and recruiting Pc to it. This chain is Midnolin homolog, found in Drosophila melanogaster (Fruit fly).